A 239-amino-acid polypeptide reads, in one-letter code: Sugar fermentation stimulation protein homolog (239 aa).

This sequence belongs to the SfsA family.

This chain is Sugar fermentation stimulation protein homolog, found in Synechococcus sp. (strain JA-2-3B'a(2-13)) (Cyanobacteria bacterium Yellowstone B-Prime).